The following is a 40-amino-acid chain: Sulfur globule protein TR0 (40 aa).

This sequence to C.vinosum CV1 and CV2. In terms of assembly, the protein envelope of the sulfur globules is composed of the three different proteins TR0, TR1 and TR2.

Functionally, structural protein of the sulfur globules, which are intracellular globules that serve for sulfur storage in purple sulfur bacteria. This Thiocapsa roseopersicina protein is Sulfur globule protein TR0.